We begin with the raw amino-acid sequence, 569 residues long: Neutral leucine aminopeptidase, chloroplastic (569 aa).

The N-terminal 48 residues, Met-1–Ser-48, are a transit peptide targeting the chloroplast. The Mn(2+) site is built by Lys-339 and Asp-344. The active site involves Lys-351. Residues Asp-364, Asp-424, and Glu-426 each contribute to the Mn(2+) site. Residue Arg-428 is part of the active site.

This sequence belongs to the peptidase M17 family. In terms of assembly, homohexamer (dimer of homotrimers). Requires Mn(2+) as cofactor. As to expression, expressed constitutively at low levels. Expressed in vegetative and reproductive organs, including leaves, stems, roots, cotyledons (after imbibition), pistils, sepals, petals, stamens, and floral buds (at protein level). Present at very low levels in healthy leaves.

Its subcellular location is the plastid. It is found in the chloroplast. The catalysed reaction is Release of an N-terminal amino acid, Xaa-|-Yaa-, in which Xaa is preferably Leu, but may be other amino acids including Pro although not Arg or Lys, and Yaa may be Pro. Amino acid amides and methyl esters are also readily hydrolyzed, but rates on arylamides are exceedingly low.. It catalyses the reaction Release of N-terminal proline from a peptide.. Catalyzes the removal of unsubstituted N-terminal amino acids from various peptides. When associated as homohexamer, catalyzes the proteolyzes of Xaa-Leu dipeptides. Possesses leucine aminopeptidase activity against the model substrate leucine-amido methyl coumarin. Presumably involved in the processing and regular turnover of intracellular proteins. Its function is as follows. Functions as a molecular chaperone to protect proteins from heat-induced damage. This chain is Neutral leucine aminopeptidase, chloroplastic, found in Solanum lycopersicum (Tomato).